The primary structure comprises 596 residues: UvrABC system protein C (596 aa).

Residues 14–91 (DQPGCYLMKD…IKLHDPKYNV (78 aa)) form the GIY-YIG domain. Positions 196 to 231 (EAVKKELEVKMLAAAENLEFERAKEFRDQIAHIDTV) constitute a UVR domain.

It belongs to the UvrC family. In terms of assembly, interacts with UvrB in an incision complex.

The protein resides in the cytoplasm. The UvrABC repair system catalyzes the recognition and processing of DNA lesions. UvrC both incises the 5' and 3' sides of the lesion. The N-terminal half is responsible for the 3' incision and the C-terminal half is responsible for the 5' incision. In Lysinibacillus sphaericus (strain C3-41), this protein is UvrABC system protein C.